Consider the following 389-residue polypeptide: MGGIGKKRVKKRTHLKADPIQEAAIPKSMVIRSGASEVGRSLSLLTRDLRHMMEPHTAIRLKERKANKIKDYLTMAGPLGVTHLLVLSRTDNNANLRIIRAPRGPSLHFRIHEYMLNKDVRRLQKNPKSPTTEFLTPPLLVMNHFNQNSSKDSPHEALLTTTFQNMFPPISVQHTNINSVKRVLLLNRRDDGYIDLRHFIISTKPVGISRPIRHLLKGEKKDSDIPDLHNVRDISDYVLHGDGISGAASDSEIEEDATVEIDRPVPTKTEENLLSASQLLKPKQQAIKLIEIGPRMTLELIKITEDAMGGKVLYHSHVHKSKEEIKQQDNFHEQSRALKEKRKKEQDENVRRKRENKKRRKDQKKEGITSSNKNDDSGNEGSSAYSDTE.

A Brix domain is found at S28 to G309. Over residues E323–V350 the composition is skewed to basic and acidic residues. Residues E323–E389 form a disordered region. Residues R351–D362 show a composition bias toward basic residues. A Phosphoserine modification is found at S377. Residues N379–E389 are compositionally biased toward polar residues.

In Schizosaccharomyces pombe (strain 972 / ATCC 24843) (Fission yeast), this protein is Brix domain-containing protein C1B9.03c.